We begin with the raw amino-acid sequence, 233 residues long: Somatolactin (233 aa).

The N-terminal stretch at 1–24 (MNMMQVMQSVVWAVLLWPCLVSLG) is a signal peptide. Intrachain disulfides connect cysteine 29/cysteine 39, cysteine 89/cysteine 205, and cysteine 222/cysteine 230.

The protein belongs to the somatotropin/prolactin family. As to expression, pituitary gland.

It is found in the secreted. In terms of biological role, may be associated with ion regulation and reproduction. This chain is Somatolactin, found in Oncorhynchus keta (Chum salmon).